The sequence spans 406 residues: Cholinephosphotransferase 1 (406 aa).

An N-acetylalanine modification is found at alanine 2. Residues 2-62 are Cytoplasmic-facing; the sequence is AAGAGARPAP…LLQWIPLWMA (61 aa). A helical transmembrane segment spans residues 63–83; the sequence is PNSITLLGLAINMLTTLVLIS. Asparagine 64 contributes to the CDP-choline binding site. Over 84-93 the chain is Lumenal; it reads YCPTVTEEAP. The chain crosses the membrane as a helical span at residues 94 to 118; it reads YWTYLLCALGLFIYQSLDAIDGKQA. Mg(2+) is bound by residues aspartate 111 and aspartate 114. Arginine 119 serves as a coordination point for CDP-choline. Over 119–125 the chain is Cytoplasmic; sequence RRTNSCS. Residues 126 to 150 form a helical membrane-spanning segment; it reads PLGELFDHGCDSLSTVFMAVGASIA. Aspartate 132 contributes to the Mg(2+) binding site. Residue histidine 133 is the Proton acceptor of the active site. Mg(2+) is bound at residue aspartate 136. Topologically, residues 151–160 are lumenal; that stretch reads VRLGTHPDWL. Residues 161–179 traverse the membrane as a helical segment; sequence FFCSFIGMFMFYCAHWQTY. At 180–190 the chain is on the cytoplasmic side; that stretch reads VSGVLRFGKVD. The chain crosses the membrane as a helical span at residues 191-207; sequence VTEIQIALVIVFVLSTF. The Lumenal segment spans residues 208–222; sequence GGATMWDYTIPILEI. Residues 223–248 traverse the membrane as a helical segment; sequence KLKILPVLGVVGGAIFSCSNYFHVIL. Residues 249–265 are Cytoplasmic-facing; that stretch reads HGGVGKNGSTIAGTSVL. The helical transmembrane segment at 266–281 threads the bilayer; the sequence is SPGLHIGIIIILAIMI. Topologically, residues 282-293 are lumenal; it reads YKKSATNLFEKH. A helical membrane pass occupies residues 294–316; sequence PCLYTLMFGCVFAKVSQKLVIAH. The Cytoplasmic portion of the chain corresponds to 317-329; sequence MTKSELYLQDTVF. Residues 330-339 traverse the membrane as a helical segment; that stretch reads IGPGLLFLDQ. Over 340-346 the chain is Lumenal; sequence YFNNFVD. A helical membrane pass occupies residues 347-376; the sequence is EYIVLWIAMVISSLDMMRYFSALCLQISRH. The Cytoplasmic segment spans residues 377–406; sequence LHLSIFKTSCHQAPEQVQVLPPKSHQNNMD.

This sequence belongs to the CDP-alcohol phosphatidyltransferase class-I family. The cofactor is Mg(2+). Mn(2+) is required as a cofactor.

It is found in the golgi apparatus membrane. The catalysed reaction is CDP-choline + a 1,2-diacyl-sn-glycerol = a 1,2-diacyl-sn-glycero-3-phosphocholine + CMP + H(+). The enzyme catalyses 1-octadecanoyl-2-(5Z,8Z,11Z,14Z-eicosatetraenoyl)-sn-glycerol + CDP-choline = 1-octadecanoyl-2-(5Z,8Z,11Z,14Z-eicosatetraenoyl)-sn-glycero-3-phosphocholine + CMP + H(+). It carries out the reaction 1-hexadecanoyl-2-(9Z-octadecenoyl)-sn-glycerol + CDP-choline = 1-hexadecanoyl-2-(9Z-octadecenoyl)-sn-glycero-3-phosphocholine + CMP + H(+). It catalyses the reaction 1-hexadecanoyl-2-(4Z,7Z,10Z,13Z,16Z,19Z-docosahexaenoyl)-sn-glycerol + CDP-choline = 1-hexadecanoyl-2-(4Z,7Z,10Z,13Z,16Z,19Z-docosahexaenoyl)-sn-glycero-3-phosphocholine + CMP + H(+). The catalysed reaction is 1,2-dioctanoyl-sn-glycerol + CDP-choline = 1,2-dioctanoyl-sn-glycero-3-phosphocholine + CMP + H(+). It functions in the pathway phospholipid metabolism; phosphatidylcholine biosynthesis; phosphatidylcholine from phosphocholine: step 2/2. Functionally, catalyzes the final step of de novo phosphatidylcholine (PC) synthesis, i.e. the transfer of choline phosphate from CDP-choline to the free hydroxyl of a diacylglycerol (DAG), producing a PC. It thereby plays a central role in the formation and maintenance of vesicular membranes. The sequence is that of Cholinephosphotransferase 1 (CHPT1) from Bos taurus (Bovine).